The sequence spans 146 residues: Large ribosomal subunit protein uL15 (146 aa).

The tract at residues Met-1–Pro-56 is disordered. Composition is skewed to gly residues over residues Arg-21–Gln-35 and Ser-42–Gly-52.

The protein belongs to the universal ribosomal protein uL15 family. As to quaternary structure, part of the 50S ribosomal subunit.

In terms of biological role, binds to the 23S rRNA. This is Large ribosomal subunit protein uL15 from Clostridium botulinum (strain Loch Maree / Type A3).